Reading from the N-terminus, the 296-residue chain is 4-hydroxy-tetrahydrodipicolinate synthase (296 aa).

Threonine 49 lines the pyruvate pocket. The active-site Proton donor/acceptor is tyrosine 137. The Schiff-base intermediate with substrate role is filled by lysine 166. Isoleucine 208 is a binding site for pyruvate.

It belongs to the DapA family. In terms of assembly, homotetramer; dimer of dimers.

The protein resides in the cytoplasm. The enzyme catalyses L-aspartate 4-semialdehyde + pyruvate = (2S,4S)-4-hydroxy-2,3,4,5-tetrahydrodipicolinate + H2O + H(+). It functions in the pathway amino-acid biosynthesis; L-lysine biosynthesis via DAP pathway; (S)-tetrahydrodipicolinate from L-aspartate: step 3/4. Catalyzes the condensation of (S)-aspartate-beta-semialdehyde [(S)-ASA] and pyruvate to 4-hydroxy-tetrahydrodipicolinate (HTPA). The sequence is that of 4-hydroxy-tetrahydrodipicolinate synthase from Chlorobium luteolum (strain DSM 273 / BCRC 81028 / 2530) (Pelodictyon luteolum).